The sequence spans 115 residues: Large ribosomal subunit protein bL19 (115 aa).

The protein belongs to the bacterial ribosomal protein bL19 family.

In terms of biological role, this protein is located at the 30S-50S ribosomal subunit interface and may play a role in the structure and function of the aminoacyl-tRNA binding site. The sequence is that of Large ribosomal subunit protein bL19 from Buchnera aphidicola subsp. Schizaphis graminum (strain Sg).